A 330-amino-acid polypeptide reads, in one-letter code: Membrane progestin receptor gamma (330 aa).

The Cytoplasmic segment spans residues 1–51 (MLSLKLPRLFSIDQIPQVFHEQGILFGYRHPQSSATACILSLFQMTNETLN). Residues 52–72 (IWTHLLPFWFFAWRFVTALYM) form a helical membrane-spanning segment. Topologically, residues 73–80 (TDIKNDSY) are extracellular. The helical transmembrane segment at 81–101 (SWPMLVYMCTSCVYPLVSSCA) threads the bilayer. Topologically, residues 102–113 (HTFSSMSKNARH) are cytoplasmic. A helical membrane pass occupies residues 114-134 (ICYFLDYGAVNLFSLGSAIAY). Residues 135–141 (SAYTFPD) are Extracellular-facing. Residues 142 to 162 (ALMCTTFHDYYVALAVLNTIL) form a helical membrane-spanning segment. At 163–186 (STGLSCYSRFLEIQKPRLCKVIRV) the chain is on the cytoplasmic side. A helical membrane pass occupies residues 187-207 (LAFAYPYTWDSLPIFYRLFLF). At 208–253 (PGESAQNEATSYHQKHMIMTLLASFLYSAHLPERLAPGRFDYIGHS) the chain is on the extracellular side. Residues 254–274 (HQLFHVCVILATHMQMEAILL) form a helical membrane-spanning segment. Residues 275–294 (DKTLRKEWLLATSKPFSFSQ) lie on the Cytoplasmic side of the membrane. Residues 295 to 315 (IAGAILLCIIFSLSNIIYFSA) traverse the membrane as a helical segment. Residues 316–330 (ALYRIPKPELHKKET) are Extracellular-facing.

This sequence belongs to the ADIPOR family. In terms of tissue distribution, expressed in the brain, lung, kidney, colon, adrenal and lung.

It localises to the cell membrane. Functionally, plasma membrane progesterone (P4) receptor coupled to G proteins. Seems to act through a G(i) mediated pathway. May be involved in oocyte maturation. In Homo sapiens (Human), this protein is Membrane progestin receptor gamma.